A 391-amino-acid chain; its full sequence is Multidrug resistance protein MdtL (391 aa).

Transmembrane regions (helical) follow at residues 4–24, 42–62, 69–89, 93–113, 131–151, 158–178, 203–222, 245–265, 269–289, 293–313, 331–351, and 356–376; these read FLIC…MYLV, IAFS…GKVA, PVAI…SLAE, LFLA…VVAF, LLNG…HLIM, SLFW…LFIL, FFLS…LTFV, ALTA…LGIF, TLMI…AVSP, VSLF…GVAM, LGIA…VVGI, and MLIG…MFVA.

The protein belongs to the major facilitator superfamily. DHA1 family. MdtL (TC 2.A.1.2.22) subfamily.

The protein localises to the cell inner membrane. Its function is as follows. Confers resistance to chloramphenicol. The protein is Multidrug resistance protein MdtL of Escherichia coli (strain SMS-3-5 / SECEC).